The chain runs to 484 residues: GRIP domain-containing protein RUD3 (484 aa).

Residues 1 to 15 (MGKNKKKTGKKAKSH) are compositionally biased toward basic residues. Residues 1–75 (MGKNKKKTGK…GVDKQKVNDG (75 aa)) form a disordered region. Basic and acidic residues predominate over residues 16–30 (PHVEDVDETVNKPEE). Phosphoserine is present on residues Ser-55 and Ser-64. The span at 61 to 72 (KDLSEGVDKQKV) shows a compositional bias: basic and acidic residues. The stretch at 84–383 (LEDKKAGDEM…LQIGKLRHEA (300 aa)) forms a coiled coil. A GRIP domain is found at 401-452 (SDSESVDKELISNLLISFVSIPRADPRKFEVLELLSNFLNWDEDKKQQAGLI). Ser-468 is subject to Phosphoserine.

Its subcellular location is the golgi apparatus lumen. In terms of biological role, involved in the structural organization of the cis-Golgi and in vesicle targeting/fusion stages of ER to Golgi transport. This chain is GRIP domain-containing protein RUD3 (RUD3), found in Saccharomyces cerevisiae (strain ATCC 204508 / S288c) (Baker's yeast).